Consider the following 97-residue polypeptide: Co-chaperonin GroES (97 aa).

The protein belongs to the GroES chaperonin family. As to quaternary structure, heptamer of 7 subunits arranged in a ring. Interacts with the chaperonin GroEL.

It localises to the cytoplasm. Its function is as follows. Together with the chaperonin GroEL, plays an essential role in assisting protein folding. The GroEL-GroES system forms a nano-cage that allows encapsulation of the non-native substrate proteins and provides a physical environment optimized to promote and accelerate protein folding. GroES binds to the apical surface of the GroEL ring, thereby capping the opening of the GroEL channel. The protein is Co-chaperonin GroES of Blochmanniella pennsylvanica (strain BPEN).